Here is a 344-residue protein sequence, read N- to C-terminus: Ketol-acid reductoisomerase (NADP(+)) (344 aa).

One can recognise a KARI N-terminal Rossmann domain in the interval 1-181 (MATMYYEQNI…GAARGGLLET (181 aa)). NADP(+)-binding positions include 25–28 (YGSQ), Arg-48, Ser-52, and 82–85 (DERQ). The active site involves His-107. Gly-133 contacts NADP(+). One can recognise a KARI C-terminal knotted domain in the interval 182 to 327 (TFKEETETDL…AKLREMMPFI (146 aa)). The Mg(2+) site is built by Asp-190, Glu-194, Glu-226, and Glu-230. Ser-251 provides a ligand contact to substrate.

This sequence belongs to the ketol-acid reductoisomerase family. Requires Mg(2+) as cofactor.

The enzyme catalyses (2R)-2,3-dihydroxy-3-methylbutanoate + NADP(+) = (2S)-2-acetolactate + NADPH + H(+). It catalyses the reaction (2R,3R)-2,3-dihydroxy-3-methylpentanoate + NADP(+) = (S)-2-ethyl-2-hydroxy-3-oxobutanoate + NADPH + H(+). The protein operates within amino-acid biosynthesis; L-isoleucine biosynthesis; L-isoleucine from 2-oxobutanoate: step 2/4. It participates in amino-acid biosynthesis; L-valine biosynthesis; L-valine from pyruvate: step 2/4. In terms of biological role, involved in the biosynthesis of branched-chain amino acids (BCAA). Catalyzes an alkyl-migration followed by a ketol-acid reduction of (S)-2-acetolactate (S2AL) to yield (R)-2,3-dihydroxy-isovalerate. In the isomerase reaction, S2AL is rearranged via a Mg-dependent methyl migration to produce 3-hydroxy-3-methyl-2-ketobutyrate (HMKB). In the reductase reaction, this 2-ketoacid undergoes a metal-dependent reduction by NADPH to yield (R)-2,3-dihydroxy-isovalerate. In Lysinibacillus sphaericus (strain C3-41), this protein is Ketol-acid reductoisomerase (NADP(+)).